The chain runs to 329 residues: Transmembrane protein I329L (329 aa).

The first 31 residues, 1–31 (MLRVFIFFVFLGSGLAGKVKSPITCKYFISK), serve as a signal peptide directing secretion. Asn-32, Asn-39, Asn-44, Asn-58, Asn-76, Asn-82, Asn-101, Asn-185, and Asn-219 each carry an N-linked (GlcNAc...) asparagine; by host glycan. At 32–239 (NNTWYKYNVT…NTERYKNCYP (208 aa)) the chain is on the extracellular side. Residues 240-260 (FVLVSIICSCISSLFLLICLL) form a helical membrane-spanning segment. Residues 261-329 (RTICKKYSCT…EKKVSCSRRK (69 aa)) are Cytoplasmic-facing.

Belongs to the asfivirus I329L family. In terms of processing, highly glycosylated.

Its subcellular location is the host endoplasmic reticulum membrane. It is found in the host Golgi apparatus membrane. Viral TLR3 homolog that probably prevents TLR3 dimerization and subsequent induction of IFN. Inhibits dsRNA-stimulated activation of NF-kB and IRF3. This Ornithodoros (relapsing fever ticks) protein is Transmembrane protein I329L.